A 204-amino-acid polypeptide reads, in one-letter code: Guanylate kinase (204 aa).

Residues 5 to 184 (GLLLVLSGPS…AVDHIKSIVE (180 aa)) enclose the Guanylate kinase-like domain. 12 to 19 (GPSGVGKG) contacts ATP.

Belongs to the guanylate kinase family.

The protein localises to the cytoplasm. The catalysed reaction is GMP + ATP = GDP + ADP. Functionally, essential for recycling GMP and indirectly, cGMP. The sequence is that of Guanylate kinase from Lactobacillus johnsonii (strain CNCM I-12250 / La1 / NCC 533).